We begin with the raw amino-acid sequence, 176 residues long: MTVENLPRRQFLRGKFSTLSCLENNQKQNFVGIRPPWSVENSIFVARCTRCGDCLSVCETNILVKGDAGFPEVRFDNGECTFCGKCVDACKQPIFYPRDQLPWSHKIDISVSCLTLHRIECRTCQDNCPANAIRFKLQMGGVAQPLVNFDACNGCGACVQGCPVNAITMNDLKQNE.

2 consecutive 4Fe-4S ferredoxin-type domains span residues 39–68 (VENS…KGDA) and 71–100 (PEVR…PRDQ). [4Fe-4S] cluster contacts are provided by Cys-48, Cys-51, Cys-54, Cys-58, Cys-80, Cys-83, Cys-86, Cys-90, Cys-113, Cys-121, Cys-124, Cys-128, Cys-152, Cys-155, Cys-158, and Cys-162. 4Fe-4S ferredoxin-type domains follow at residues 119 to 138 (IECR…FKLQ) and 143 to 172 (AQPL…MNDL).

The protein belongs to the NapF family. As to quaternary structure, interacts with the cytoplasmic NapA precursor. [4Fe-4S] cluster is required as a cofactor.

The protein localises to the cytoplasm. Functionally, could be involved in the maturation of NapA, the catalytic subunit of the periplasmic nitrate reductase, before its export into the periplasm. This chain is Ferredoxin-type protein NapF, found in Haemophilus influenzae (strain ATCC 51907 / DSM 11121 / KW20 / Rd).